The chain runs to 314 residues: S-methyl-5'-thioadenosine phosphorylase (314 aa).

Residues serine 31, 73 to 74 (RH), and 106 to 107 (SA) each bind phosphate. Position 207 (methionine 207) interacts with substrate. Threonine 208 serves as a coordination point for phosphate. Residue 231 to 233 (DYD) coordinates substrate.

This sequence belongs to the PNP/MTAP phosphorylase family. MTAP subfamily. Homohexamer. Dimer of a homotrimer.

The enzyme catalyses S-methyl-5'-thioadenosine + phosphate = 5-(methylsulfanyl)-alpha-D-ribose 1-phosphate + adenine. Its pathway is amino-acid biosynthesis; L-methionine biosynthesis via salvage pathway; S-methyl-5-thio-alpha-D-ribose 1-phosphate from S-methyl-5'-thioadenosine (phosphorylase route): step 1/1. In terms of biological role, catalyzes the reversible phosphorylation of S-methyl-5'-thioadenosine (MTA) to adenine and 5-methylthioribose-1-phosphate. Involved in the breakdown of MTA, a major by-product of polyamine biosynthesis. Responsible for the first step in the methionine salvage pathway after MTA has been generated from S-adenosylmethionine. Has broad substrate specificity with 6-aminopurine nucleosides as preferred substrates. The polypeptide is S-methyl-5'-thioadenosine phosphorylase (Prochlorococcus marinus (strain SARG / CCMP1375 / SS120)).